A 317-amino-acid polypeptide reads, in one-letter code: Anamorsin homolog (317 aa).

The interval Met1–Ala192 is N-terminal SAM-like domain. The interval Lys193–Tyr216 is linker. 4 residues coordinate [2Fe-2S] cluster: Cys219, Cys226, Cys229, and Cys231. The fe-S binding site A stretch occupies residues Cys219–Cys231. Cys286, Cys289, Cys297, and Cys300 together coordinate [4Fe-4S] cluster. 2 short sequence motifs (cx2C motif) span residues Cys286 to Cys289 and Cys297 to Cys300. The tract at residues Cys286–Cys300 is fe-S binding site B.

The protein belongs to the anamorsin family. In terms of assembly, monomer. Requires [2Fe-2S] cluster as cofactor. [4Fe-4S] cluster is required as a cofactor.

The protein resides in the cytoplasm. Its subcellular location is the mitochondrion intermembrane space. In terms of biological role, component of the cytosolic iron-sulfur (Fe-S) protein assembly (CIA) machinery. Required for the maturation of extramitochondrial Fe-S proteins. Part of an electron transfer chain functioning in an early step of cytosolic Fe-S biogenesis, facilitating the de novo assembly of a [4Fe-4S] cluster on the cytosolic Fe-S scaffold complex. Electrons are transferred from NADPH via a FAD- and FMN-containing diflavin oxidoreductase. Together with the diflavin oxidoreductase, also required for the assembly of the diferric tyrosyl radical cofactor of ribonucleotide reductase (RNR), probably by providing electrons for reduction during radical cofactor maturation in the catalytic small subunit. In Theileria parva (East coast fever infection agent), this protein is Anamorsin homolog.